The sequence spans 393 residues: Ferrochelatase, mitochondrial (393 aa).

A mitochondrion-targeting transit peptide spans 1 to 31; it reads MLSRTIRTQGSFLRRSQLTITRSFSVTFNMQ. Asp351 is an active-site residue.

The protein belongs to the ferrochelatase family. Post-translationally, the leader peptide may be processed in two proteolytic steps, first between Ser-23 and Phe-24, second and by a different protease, to yield the mature protein.

It is found in the mitochondrion inner membrane. The catalysed reaction is heme b + 2 H(+) = protoporphyrin IX + Fe(2+). Its pathway is porphyrin-containing compound metabolism; protoheme biosynthesis; protoheme from protoporphyrin-IX: step 1/1. In terms of biological role, catalyzes the ferrous insertion into protoporphyrin IX. The sequence is that of Ferrochelatase, mitochondrial (HEM15) from Saccharomyces cerevisiae (strain ATCC 204508 / S288c) (Baker's yeast).